The following is a 396-amino-acid chain: Ornithine aminotransferase (396 aa).

Lys255 is subject to N6-(pyridoxal phosphate)lysine.

This sequence belongs to the class-III pyridoxal-phosphate-dependent aminotransferase family. OAT subfamily. Pyridoxal 5'-phosphate serves as cofactor.

The protein localises to the cytoplasm. It carries out the reaction a 2-oxocarboxylate + L-ornithine = L-glutamate 5-semialdehyde + an L-alpha-amino acid. Its pathway is amino-acid biosynthesis; L-proline biosynthesis; L-glutamate 5-semialdehyde from L-ornithine: step 1/1. Catalyzes the interconversion of ornithine to glutamate semialdehyde. The chain is Ornithine aminotransferase from Bacillus cereus (strain 03BB102).